Consider the following 299-residue polypeptide: Plasmodesmata-located protein 5 (299 aa).

Residues 1-25 form the signal peptide; that stretch reads MIKTKTTSLLCFLLTAVILMNPSSS. Residues 26–264 are Extracellular-facing; it reads SPTDNYIYAV…NKDDNGVGKT (239 aa). Gnk2-homologous domains follow at residues 29–135 and 137–237; these read DNYI…NKSF and GVQD…VGGS. 6 disulfides stabilise this stretch: cysteine 36–cysteine 113, cysteine 89–cysteine 98, cysteine 101–cysteine 126, cysteine 148–cysteine 215, cysteine 191–cysteine 200, and cysteine 203–cysteine 228. A helical membrane pass occupies residues 265-285; that stretch reads LAIIIGIVTLIILLVVFLAFV. The necessary and sufficient for plasmodesmal targeting stretch occupies residues 265–285; sequence LAIIIGIVTLIILLVVFLAFV. The Cytoplasmic portion of the chain corresponds to 286-299; the sequence is GKCCRKLQDEKWCK.

Belongs to the cysteine-rich repeat secretory protein family. Plasmodesmata-located proteins (PDLD) subfamily. As to quaternary structure, monomer. Interacts with PDLP1. (Microbial infection) Interacts with Grapevine fanleaf virus (GFLV) 2B-MP. As to expression, highly expressed in inflorescence nodes and rosette senescent leaves. Mostly expressed in cell wall junctions between leaf epidermal and mesophyl cells, and to a lesser extent at the cross walls between epidermal or cortex cells within the hypocotyl (at protein level). Low vascular expression in seedling and mature leaf, but high expression in senescing leaves (at protein level).

It localises to the cell membrane. The protein localises to the cell junction. Its subcellular location is the plasmodesma. Its function is as follows. Modulates cell-to-cell trafficking. Has a positive role in innate immunity. Required for systemic acquired resistance (SAR) which is mediated by the signaling molecules azelaic acid (AzA), glycerol-3-phosphate (G3P), and salicylic acid (SA). Negative regulator of plasmodesmata permeability triggered by SA during immune responses, through regulation of callose deposition. Delays the trafficking of Tobacco Mosaic Virus (TMV) movement protein (MP). Required for symplastic signal transport. This is Plasmodesmata-located protein 5 from Arabidopsis thaliana (Mouse-ear cress).